We begin with the raw amino-acid sequence, 282 residues long: E3 ubiquitin-protein ligase SIAH1 (282 aa).

The span at 1-17 (MSRQTATALPTGTSKCP) shows a compositional bias: polar residues. A disordered region spans residues 1–22 (MSRQTATALPTGTSKCPPSQRV). S19 bears the Phosphoserine; by ATM and ATR mark. The RING-type zinc-finger motif lies at 41 to 76 (CPVCFDYVLPPILQCQSGHLVCSNCRPKLTCCPTCR). The segment at 90–282 (VANSVLFPCK…LGINVTISMC (193 aa)) is SBD. The SIAH-type zinc-finger motif lies at 93-153 (SVLFPCKYAS…VMPHLMHQHK (61 aa)). The Zn(2+) site is built by C98, C105, H117, C121, C128, C135, H147, and H152.

Belongs to the SINA (Seven in absentia) family. In terms of assembly, homodimer. Interacts with group 1 glutamate receptors GRM1 and GRM5. Interacts with DAB1, which may inhibit its activity. Interacts with UBE2E2. Interacts with PEG3. Interacts with GAPDH; leading to stabilize SIAH1. Component of some large E3 complex composed of UBE2D1, SIAH1, CACYBP/SIP, SKP1, APC and TBL1X. Interacts with UBE2I. Interacts with alpha-tubulin. Interacts with PEG10, which may inhibit its activity. Interacts with KHDRBS3. Interacts with SNCAIP. Interacts with HIPK2; the interaction is promoted by DAZAP2 and results in SIAH1-mediated ubiquitination and subsequent proteasomal degradation of HIPK2. Interacts with DAZAP2; the interaction is decreased following phosphorylation of DAZAP2 by HIPK2. Interacts with Bassoon/BSN and Piccolo/PLCO; these interactions negatively regulate SIAH1 E3 ligase activity. Interacts with DCC. Interacts with AXIN1; catalyzes AXIN1 ubiquitination and subsequent proteasome-mediated ubiquitin-dependent degradation. Post-translationally, phosphorylated on Ser-19 by ATM and ATR. This phosphorylation disrupts SIAH1 interaction with HIPK2, and subsequent proteasomal degradation of HIPK2. As to expression, widely expressed at a low level. Down-regulated in advanced hepatocellular carcinomas.

It localises to the cytoplasm. The protein localises to the nucleus. The enzyme catalyses S-ubiquitinyl-[E2 ubiquitin-conjugating enzyme]-L-cysteine + [acceptor protein]-L-lysine = [E2 ubiquitin-conjugating enzyme]-L-cysteine + N(6)-ubiquitinyl-[acceptor protein]-L-lysine.. The protein operates within protein modification; protein ubiquitination. With respect to regulation, inhibited by interaction with SNCAIP (isoform 2, but not isoform 1). May be inhibited by interaction with PEG10. Functionally, E3 ubiquitin-protein ligase that mediates ubiquitination and subsequent proteasomal degradation of target proteins. E3 ubiquitin ligases accept ubiquitin from an E2 ubiquitin-conjugating enzyme in the form of a thioester and then directly transfers the ubiquitin to targeted substrates. Mediates E3 ubiquitin ligase activity either through direct binding to substrates or by functioning as the essential RING domain subunit of larger E3 complexes. Triggers the ubiquitin-mediated degradation of many substrates, including proteins involved in transcription regulation (ELL2, MYB, POU2AF1, PML and RBBP8), a cell surface receptor (DCC), the cell-surface receptor-type tyrosine kinase FLT3, the cytoplasmic signal transduction molecules (KLF10/TIEG1 and NUMB), an antiapoptotic protein (BAG1), a microtubule motor protein (KIF22), a protein involved in synaptic vesicle function in neurons (SYP), a structural protein (CTNNB1) and SNCAIP. Confers constitutive instability to HIPK2 through proteasomal degradation. It is thereby involved in many cellular processes such as apoptosis, tumor suppression, cell cycle, axon guidance, transcription regulation, spermatogenesis and TNF-alpha signaling. Has some overlapping function with SIAH2. Induces apoptosis in cooperation with PEG3. Upon nitric oxid (NO) generation that follows apoptotic stimulation, interacts with S-nitrosylated GAPDH, mediating the translocation of GAPDH to the nucleus. GAPDH acts as a stabilizer of SIAH1, facilitating the degradation of nuclear proteins. Mediates ubiquitination and degradation of EGLN2 and EGLN3 in response to the unfolded protein response (UPR), leading to their degradation and subsequent stabilization of ATF4. Also part of the Wnt signaling pathway in which it mediates the Wnt-induced ubiquitin-mediated proteasomal degradation of AXIN1. The protein is E3 ubiquitin-protein ligase SIAH1 (SIAH1) of Homo sapiens (Human).